The following is a 215-amino-acid chain: 3,4-dihydroxy-2-butanone 4-phosphate synthase (215 aa).

D-ribulose 5-phosphate-binding positions include 37–38, D42, 150–154, and E175; these read RE and RRGHT. E38 is a Mg(2+) binding site. Residue H153 coordinates Mg(2+).

It belongs to the DHBP synthase family. As to quaternary structure, homodimer. Mg(2+) is required as a cofactor. Mn(2+) serves as cofactor.

The catalysed reaction is D-ribulose 5-phosphate = (2S)-2-hydroxy-3-oxobutyl phosphate + formate + H(+). Its pathway is cofactor biosynthesis; riboflavin biosynthesis; 2-hydroxy-3-oxobutyl phosphate from D-ribulose 5-phosphate: step 1/1. In terms of biological role, catalyzes the conversion of D-ribulose 5-phosphate to formate and 3,4-dihydroxy-2-butanone 4-phosphate. This is 3,4-dihydroxy-2-butanone 4-phosphate synthase from Desulfatibacillum aliphaticivorans.